Reading from the N-terminus, the 111-residue chain is UPF0122 protein LACR_1522 (111 aa).

It belongs to the UPF0122 family.

Might take part in the signal recognition particle (SRP) pathway. This is inferred from the conservation of its genetic proximity to ftsY/ffh. May be a regulatory protein. The chain is UPF0122 protein LACR_1522 from Lactococcus lactis subsp. cremoris (strain SK11).